The following is a 450-amino-acid chain: Phosphoglucosamine mutase (450 aa).

Residue Ser97 is the Phosphoserine intermediate of the active site. Positions 97, 236, 238, and 240 each coordinate Mg(2+). Position 97 is a phosphoserine (Ser97).

The protein belongs to the phosphohexose mutase family. Mg(2+) is required as a cofactor. Activated by phosphorylation.

It carries out the reaction alpha-D-glucosamine 1-phosphate = D-glucosamine 6-phosphate. Catalyzes the conversion of glucosamine-6-phosphate to glucosamine-1-phosphate. In Prochlorococcus marinus (strain MIT 9215), this protein is Phosphoglucosamine mutase.